The following is a 68-amino-acid chain: Bacteriocin lactococcin-B (68 aa).

A propeptide spanning residues 1 to 21 (MKNQLNFNIVSDEELAEVNGG) is cleaved from the precursor.

Its subcellular location is the secreted. Its function is as follows. Kills Lactococci by dissipating the membrane potential of the cells. In Lactococcus lactis subsp. cremoris (Streptococcus cremoris), this protein is Bacteriocin lactococcin-B (lcnB).